A 124-amino-acid chain; its full sequence is MATINQLVRKPRVKLVDKNNVPALQECPQKRGVCTRVYTTTPKKPNSAMRKVARTRLTNKYEVTAYIGGEGHNLQEHSLVLIRGGRVKDLPGVRYHIVRGALDTAGVKDRKKGRSKYGAKRPKA.

Residue aspartate 89 is modified to 3-methylthioaspartic acid. A disordered region spans residues 105–124 (AGVKDRKKGRSKYGAKRPKA). Over residues 109-124 (DRKKGRSKYGAKRPKA) the composition is skewed to basic residues.

The protein belongs to the universal ribosomal protein uS12 family. In terms of assembly, part of the 30S ribosomal subunit. Contacts proteins S8 and S17. May interact with IF1 in the 30S initiation complex.

Its function is as follows. With S4 and S5 plays an important role in translational accuracy. In terms of biological role, interacts with and stabilizes bases of the 16S rRNA that are involved in tRNA selection in the A site and with the mRNA backbone. Located at the interface of the 30S and 50S subunits, it traverses the body of the 30S subunit contacting proteins on the other side and probably holding the rRNA structure together. The combined cluster of proteins S8, S12 and S17 appears to hold together the shoulder and platform of the 30S subunit. In Dichelobacter nodosus (strain VCS1703A), this protein is Small ribosomal subunit protein uS12.